The sequence spans 293 residues: Elongation factor Ts (293 aa).

The involved in Mg(2+) ion dislocation from EF-Tu stretch occupies residues 80–83; that stretch reads TDFV.

It belongs to the EF-Ts family.

It is found in the cytoplasm. Its function is as follows. Associates with the EF-Tu.GDP complex and induces the exchange of GDP to GTP. It remains bound to the aminoacyl-tRNA.EF-Tu.GTP complex up to the GTP hydrolysis stage on the ribosome. This chain is Elongation factor Ts, found in Paraburkholderia phytofirmans (strain DSM 17436 / LMG 22146 / PsJN) (Burkholderia phytofirmans).